Consider the following 166-residue polypeptide: Succinate dehydrogenase assembly factor 2, mitochondrial (166 aa).

Residues 1-29 (MAVVAVFPALARMLAVSRRRLVSPSLSMT) constitute a mitochondrion transit peptide.

Belongs to the SDHAF2 family. Interacts with SDHA within the SDH catalytic dimer.

The protein localises to the mitochondrion matrix. Functionally, plays an essential role in the assembly of succinate dehydrogenase (SDH), an enzyme complex (also referred to as respiratory complex II) that is a component of both the tricarboxylic acid (TCA) cycle and the mitochondrial electron transport chain, and which couples the oxidation of succinate to fumarate with the reduction of ubiquinone (coenzyme Q) to ubiquinol. Required for flavinylation (covalent attachment of FAD) of the flavoprotein subunit SDHA of the SDH catalytic dimer. The sequence is that of Succinate dehydrogenase assembly factor 2, mitochondrial from Bos taurus (Bovine).